The primary structure comprises 574 residues: E3 ubiquitin-protein ligase TRIM23 (574 aa).

The RING-type; degenerate zinc-finger motif lies at 31–76 (CGVCEDVFSLQGDKVPRLLLCGHTVCHDCLTRLPLHGRAIRCPFDR). The segment at 122–168 (ESIIRCDEDEAHLASVYCTVCATHLCSECSQVTHSTKTLAKHRRVPL) adopts a B box-type; degenerate zinc-finger fold. Residues 352–379 (RVVLAKQEITRLLETLQKQQQQFTEVAD) are a coiled coil. The interval 390 to 574 (TFTKDNRVHI…LVAAGVLDVA (185 aa)) is ARF-like. GTP contacts are provided by residues 411–418 (GLDGAGKT), 454–458 (DVGGK), and 513–516 (NKQD).

The protein in the C-terminal section; belongs to the small GTPase superfamily. Arf family. In terms of assembly, homodimer. Interacts with PSCD1. Interacts with UBE2D2. Interacts with TBK1 (via N-terminal kinase domain) and p62/SQSTM1. As to quaternary structure, (Microbial infection) Interacts with human cytomegalovirus protein UL144; this interaction might cause autoubiquitination of TRAF6, leading to NF-kappa-B activation.

The protein localises to the cytoplasm. It is found in the endomembrane system. The protein resides in the golgi apparatus membrane. Its subcellular location is the lysosome membrane. The catalysed reaction is S-ubiquitinyl-[E2 ubiquitin-conjugating enzyme]-L-cysteine + [acceptor protein]-L-lysine = [E2 ubiquitin-conjugating enzyme]-L-cysteine + N(6)-ubiquitinyl-[acceptor protein]-L-lysine.. The protein operates within protein modification; protein ubiquitination. In terms of biological role, acts as an E3 ubiquitin-protein ligase. Plays an essential role in autophagy activation during viral infection. Mechanistically, activates TANK-binding kinase 1/TBK1 by facilitating its dimerization and ability to phosphorylate the selective autophagy receptor SQSTM1. In order to achieve this function, TRIM23 mediates 'Lys-27'-linked auto-ubiquitination of its ADP-ribosylation factor (ARF) domain to induce its GTPase activity and its recruitment to autophagosomes. Its function is as follows. (Microbial infection) Mediates TRAF6 auto-ubiquitination in the presence of human cytomegalovirus protein UL144, resulting in the virally controlled activation of NF-kappa-B stimulation at early times of HCMV infection. The protein is E3 ubiquitin-protein ligase TRIM23 (TRIM23) of Homo sapiens (Human).